A 355-amino-acid polypeptide reads, in one-letter code: Probable cinnamyl alcohol dehydrogenase (355 aa).

Cysteine 47 contacts Zn(2+). Serine 49 contacts NADP(+). Positions 69, 70, 100, 103, 106, 114, and 162 each coordinate Zn(2+). NADP(+)-binding positions include threonine 166, 187–192, 210–215, threonine 250, glycine 274, and 297–299; these read GLGGVG, SSSDKK, and SFI.

It belongs to the zinc-containing alcohol dehydrogenase family. Homodimer. Requires Zn(2+) as cofactor.

The enzyme catalyses (E)-cinnamyl alcohol + NADP(+) = (E)-cinnamaldehyde + NADPH + H(+). It carries out the reaction (E)-coniferol + NADP(+) = (E)-coniferaldehyde + NADPH + H(+). It catalyses the reaction (E)-sinapyl alcohol + NADP(+) = (E)-sinapaldehyde + NADPH + H(+). The catalysed reaction is (E)-4-coumaroyl alcohol + NADP(+) = (E)-4-coumaraldehyde + NADPH + H(+). The enzyme catalyses (E)-caffeyl alcohol + NADP(+) = (E)-caffeyl aldehyde + NADPH + H(+). It participates in aromatic compound metabolism; phenylpropanoid biosynthesis. Functionally, involved in lignin biosynthesis. Catalyzes the final step specific for the production of lignin monomers. Catalyzes the NADPH-dependent reduction of coniferaldehyde, 5-hydroxyconiferaldehyde, sinapaldehyde, 4-coumaraldehyde and caffeyl aldehyde to their respective alcohols. The chain is Probable cinnamyl alcohol dehydrogenase (CAD1) from Eucalyptus botryoides (Southern mahogany).